The sequence spans 167 residues: Translationally-controlled tumor protein homolog (167 aa).

A TCTP domain is found at 1 to 167 (MIIYTDIISG…WKHGVKAEKI (167 aa)).

The protein belongs to the TCTP family.

It localises to the cytoplasm. The protein localises to the cytoskeleton. Its function is as follows. Involved in protein synthesis. Involved in microtubule stabilization. The protein is Translationally-controlled tumor protein homolog of Kluyveromyces lactis (strain ATCC 8585 / CBS 2359 / DSM 70799 / NBRC 1267 / NRRL Y-1140 / WM37) (Yeast).